Here is a 566-residue protein sequence, read N- to C-terminus: 4-coumarate--CoA ligase-like 6 (566 aa).

The disordered stretch occupies residues 1–21 (MAATHLHIPPNPKTQTSHQNP). ATP is bound by residues S212, S213, G214, T215, T216, and K220. Y263 serves as a coordination point for (E)-4-coumaroyl-AMP. Residue R284 participates in CoA binding. Positions 286–356 (DASDVVNVIE…QTLPHVDLIQ (71 aa)) are SBD1. Residues A334, Q356, G357, and T361 each contribute to the (E)-4-coumaroyl-AMP site. ATP-binding residues include Q356, G357, T361, D442, and R457. The SBD2 stretch occupies residues 357 to 421 (GYGMTESTAV…IQGPGVMKGY (65 aa)). K459 and K463 together coordinate (E)-4-coumaroyl-AMP. Residues K465 and G466 each contribute to the CoA site. K548 contributes to the ATP binding site. Positions 564–566 (SRL) match the Microbody targeting signal motif.

It belongs to the ATP-dependent AMP-binding enzyme family. It depends on Mg(2+) as a cofactor. In terms of tissue distribution, expressed at very low level in leaves.

It is found in the peroxisome. It catalyses the reaction (E)-4-coumarate + ATP + CoA = (E)-4-coumaroyl-CoA + AMP + diphosphate. It carries out the reaction (E)-4-coumarate + ATP + H(+) = (E)-4-coumaroyl-AMP + diphosphate. The enzyme catalyses (E)-4-coumaroyl-AMP + CoA = (E)-4-coumaroyl-CoA + AMP + H(+). The catalysed reaction is (E)-ferulate + ATP + CoA = (E)-feruloyl-CoA + AMP + diphosphate. It catalyses the reaction (E)-ferulate + ATP + H(+) = (E)-feruloyl-AMP + diphosphate. It carries out the reaction (E)-feruloyl-AMP + CoA = (E)-feruloyl-CoA + AMP + H(+). The enzyme catalyses (E)-caffeate + ATP + CoA = (E)-caffeoyl-CoA + AMP + diphosphate. The catalysed reaction is (E)-caffeate + ATP + H(+) = (E)-caffeoyl-AMP + diphosphate. It catalyses the reaction (E)-caffeoyl-AMP + CoA = (E)-caffeoyl-CoA + AMP + H(+). It carries out the reaction (E)-cinnamate + ATP + CoA = (E)-cinnamoyl-CoA + AMP + diphosphate. The enzyme catalyses 4-hydroxybenzoate + ATP + CoA = 4-hydroxybenzoyl-CoA + AMP + diphosphate. The catalysed reaction is tetradecanoate + ATP + CoA = tetradecanoyl-CoA + AMP + diphosphate. It catalyses the reaction hexanoate + ATP + CoA = hexanoyl-CoA + AMP + diphosphate. It carries out the reaction heptanoate + ATP + CoA = heptanoyl-CoA + AMP + diphosphate. Contributes to jasmonic acid biosynthesis by initiating the beta-oxidative chain shortening of its precursors. Acts as a carboxylate--CoA ligase that can use preferentially p-coumarate, ferulate and caffeate as substrates and, with a lower efficiency, (E)-cinnamate and 4-hydroxybenzoate as substrates. Involved in the biosynthesis of ubiquinone from phenylalanine by activating the propyl side chain of 4-coumarate, and possibly trans-cinnamate and 4-hydroxybenzoate, for subsequent beta-oxidative shortening and the formation of the benzenoid moiety of ubiquinone. Follows a two-step reaction mechanism, wherein the carboxylate substrate first undergoes adenylation by ATP, followed by a thioesterification in the presence of CoA to yield the final CoA thioester. The sequence is that of 4-coumarate--CoA ligase-like 6 from Arabidopsis thaliana (Mouse-ear cress).